Reading from the N-terminus, the 246-residue chain is uncharacterized protein (246 aa).

The N-terminal stretch at Met-1 to Glu-30 is a signal peptide.

This is an uncharacterized protein from Bacillus subtilis (strain 168).